A 141-amino-acid chain; its full sequence is Hemoglobin subunit alpha-A (141 aa).

One can recognise a Globin domain in the interval 1-141 (VLSAADKTNV…VGTVLTAKYR (141 aa)). Position 58 (histidine 58) interacts with O2. Histidine 87 contacts heme b.

It belongs to the globin family. In terms of assembly, heterotetramer of two alpha chains and two beta chains. In terms of tissue distribution, red blood cells.

Its function is as follows. Involved in oxygen transport from the lung to the various peripheral tissues. This Turdus merula (Common blackbird) protein is Hemoglobin subunit alpha-A (HBAA).